Consider the following 366-residue polypeptide: HTH-type transcriptional regulator MSMEG_6044/MSMEI_5883 (366 aa).

An HTH lacI-type domain is found at 11–66 (ATLASLAAELKVSRTTISNAYNRPDQLSADLRERIFDAAKRLGYPGPDPVARSLRT). Residues 13–32 (LASLAAELKVSRTTISNAYN) constitute a DNA-binding region (H-T-H motif).

Transcriptional regulator that negatively regulates transcription of the mce4 operon, which is involved in cholesterol transport and utilization. Acts by binding to the promoter region of the mce4 operon. The chain is HTH-type transcriptional regulator MSMEG_6044/MSMEI_5883 from Mycolicibacterium smegmatis (strain ATCC 700084 / mc(2)155) (Mycobacterium smegmatis).